We begin with the raw amino-acid sequence, 621 residues long: 1-deoxy-D-xylulose-5-phosphate synthase (621 aa).

Residues H80 and 121–123 (GHS) contribute to the thiamine diphosphate site. D152 contributes to the Mg(2+) binding site. Residues 153–154 (GA), N181, Y288, and E370 each bind thiamine diphosphate. Mg(2+) is bound at residue N181.

Belongs to the transketolase family. DXPS subfamily. In terms of assembly, homodimer. Requires Mg(2+) as cofactor. It depends on thiamine diphosphate as a cofactor.

It carries out the reaction D-glyceraldehyde 3-phosphate + pyruvate + H(+) = 1-deoxy-D-xylulose 5-phosphate + CO2. It functions in the pathway metabolic intermediate biosynthesis; 1-deoxy-D-xylulose 5-phosphate biosynthesis; 1-deoxy-D-xylulose 5-phosphate from D-glyceraldehyde 3-phosphate and pyruvate: step 1/1. In terms of biological role, catalyzes the acyloin condensation reaction between C atoms 2 and 3 of pyruvate and glyceraldehyde 3-phosphate to yield 1-deoxy-D-xylulose-5-phosphate (DXP). The protein is 1-deoxy-D-xylulose-5-phosphate synthase of Vibrio vulnificus (strain CMCP6).